The following is a 434-amino-acid chain: N-acylneuraminate cytidylyltransferase (434 aa).

The residue at position 1 (Met-1) is an N-acetylmethionine. Residues 1-42 (MDSVEKGAATSVSNPRGRPSRGRPPKLQRNSRGGQGRGVEKP) form a disordered region. Positions 15-31 (PRGRPSRGRPPKLQRNS) match the BC1 motif motif. Residues Arg-37 and Arg-52 each carry the omega-N-methylarginine modification. Substrate contacts are provided by Arg-52, Asn-62, Arg-111, Ser-120, Ser-122, and Gln-143. Positions 200-206 (KRPRRQD) match the BC2 motif motif. Residue Arg-201 is part of the active site. The short motif at 269–276 (KEKLKEIK) is the BC3 motif element.

This sequence belongs to the CMP-NeuNAc synthase family. Homotetramer; the active enzyme is formed by a dimer of dimers. In terms of tissue distribution, ubiquitously expressed. Expressed in pancreas, kidney, liver, skeletal muscle, lung, placenta, brain, heart, colon, PBL, small intestine, ovary, testis, prostate, thymus and spleen.

It localises to the nucleus. It catalyses the reaction an N-acylneuraminate + CTP = a CMP-N-acyl-beta-neuraminate + diphosphate. It participates in amino-sugar metabolism; N-acetylneuraminate metabolism. Functionally, catalyzes the activation of N-acetylneuraminic acid (NeuNAc) to cytidine 5'-monophosphate N-acetylneuraminic acid (CMP-NeuNAc), a substrate required for the addition of sialic acid. Has some activity toward NeuNAc, N-glycolylneuraminic acid (Neu5Gc) or 2-keto-3-deoxy-D-glycero-D-galacto-nononic acid (KDN). This Homo sapiens (Human) protein is N-acylneuraminate cytidylyltransferase (CMAS).